The primary structure comprises 184 residues: Large ribosomal subunit protein eL14 (184 aa).

Residues 149–184 form a disordered region; it reads KNAKKVDSTPAAKKRIEKARAARKAKPTAAKEKSKK. Over residues 160 to 174 the composition is skewed to basic residues; it reads AKKRIEKARAARKAK.

This sequence belongs to the eukaryotic ribosomal protein eL14 family.

In Trypanosoma congolense, this protein is Large ribosomal subunit protein eL14.